We begin with the raw amino-acid sequence, 449 residues long: Chromosomal replication initiator protein DnaA (449 aa).

The domain I, interacts with DnaA modulators stretch occupies residues 1–72 (MPNLEELWAY…VEGVYEFAQL (72 aa)). Residues 72–109 (LEVDPVIMTKDELQPAPATDQRPAVEEDDQNLTFKAKT) are domain II. Residues 110-326 (HLNPKYTFDR…GALVRVQAFS (217 aa)) are domain III, AAA+ region. G154, G156, K157, and T158 together coordinate ATP. The interval 327-449 (TMKNEDITTS…ELRNILKNRG (123 aa)) is domain IV, binds dsDNA.

It belongs to the DnaA family. In terms of assembly, oligomerizes as a right-handed, spiral filament on DNA at oriC.

Its subcellular location is the cytoplasm. Its function is as follows. Plays an essential role in the initiation and regulation of chromosomal replication. ATP-DnaA binds to the origin of replication (oriC) to initiate formation of the DNA replication initiation complex once per cell cycle. Binds the DnaA box (a 9 base pair repeat at the origin) and separates the double-stranded (ds)DNA. Forms a right-handed helical filament on oriC DNA; dsDNA binds to the exterior of the filament while single-stranded (ss)DNA is stabiized in the filament's interior. The ATP-DnaA-oriC complex binds and stabilizes one strand of the AT-rich DNA unwinding element (DUE), permitting loading of DNA polymerase. After initiation quickly degrades to an ADP-DnaA complex that is not apt for DNA replication. Binds acidic phospholipids. The sequence is that of Chromosomal replication initiator protein DnaA from Lacticaseibacillus casei (strain BL23) (Lactobacillus casei).